A 59-amino-acid chain; its full sequence is Eag protein (59 aa).

This chain is Eag protein (eag), found in Salmonella phage P22 (Bacteriophage P22).